Reading from the N-terminus, the 385-residue chain is 8-amino-7-oxononanoate synthase (385 aa).

R21 lines the substrate pocket. 108-109 (GF) contributes to the pyridoxal 5'-phosphate binding site. H133 serves as a coordination point for substrate. S179, H207, and T233 together coordinate pyridoxal 5'-phosphate. Residue K236 is modified to N6-(pyridoxal phosphate)lysine. T352 contributes to the substrate binding site.

This sequence belongs to the class-II pyridoxal-phosphate-dependent aminotransferase family. BioF subfamily. Homodimer. Pyridoxal 5'-phosphate serves as cofactor.

The catalysed reaction is 6-carboxyhexanoyl-[ACP] + L-alanine + H(+) = (8S)-8-amino-7-oxononanoate + holo-[ACP] + CO2. It functions in the pathway cofactor biosynthesis; biotin biosynthesis. Its function is as follows. Catalyzes the decarboxylative condensation of pimeloyl-[acyl-carrier protein] and L-alanine to produce 8-amino-7-oxononanoate (AON), [acyl-carrier protein], and carbon dioxide. The sequence is that of 8-amino-7-oxononanoate synthase from Salmonella agona (strain SL483).